The sequence spans 555 residues: Formate--tetrahydrofolate ligase (555 aa).

Residue 65-72 coordinates ATP; it reads TPAGEGKS.

It belongs to the formate--tetrahydrofolate ligase family.

It catalyses the reaction (6S)-5,6,7,8-tetrahydrofolate + formate + ATP = (6R)-10-formyltetrahydrofolate + ADP + phosphate. It participates in one-carbon metabolism; tetrahydrofolate interconversion. The polypeptide is Formate--tetrahydrofolate ligase (Lactococcus lactis subsp. lactis (strain IL1403) (Streptococcus lactis)).